Here is a 357-residue protein sequence, read N- to C-terminus: Quinolinate synthase (357 aa).

Residues His-50 and Ser-71 each contribute to the iminosuccinate site. Cys-116 contributes to the [4Fe-4S] cluster binding site. Residues 142–144 and Ser-159 each bind iminosuccinate; that span reads YAN. Cys-203 is a binding site for [4Fe-4S] cluster. Iminosuccinate-binding positions include 229-231 and Thr-246; that span reads HPE. Residue Cys-300 participates in [4Fe-4S] cluster binding.

It belongs to the quinolinate synthase family. Type 1 subfamily. It depends on [4Fe-4S] cluster as a cofactor.

Its subcellular location is the cytoplasm. It catalyses the reaction iminosuccinate + dihydroxyacetone phosphate = quinolinate + phosphate + 2 H2O + H(+). Its pathway is cofactor biosynthesis; NAD(+) biosynthesis; quinolinate from iminoaspartate: step 1/1. Its function is as follows. Catalyzes the condensation of iminoaspartate with dihydroxyacetone phosphate to form quinolinate. The sequence is that of Quinolinate synthase from Shewanella sp. (strain ANA-3).